The primary structure comprises 486 residues: MTEQAKWNFDNSYARLPQPFFARLKPNPVRSPKLVLFNEPLATALGLNGEALQQPEGVAVLAGNVIPEGGEALAQAYAGHQFGHFTMLGDGRALLIGEQITPDGNRFDIQLKGSGRTPFSRGGDGRAALGPMLREFLISEAMHALGIPTTRSLAVVTTGEEIWRETELPGAVLTRVAESHLRVGTFQYAAGRGEVNDVKTLADYAIKRHYPELAESENPYLSLLEQVITRQANLISQWQLVGFVHGVMNTDNMTISGETIDYGPCAFMDTYDPATVFSSIDTQGRYAYGNQPQIANWNLARFAETLVPLLAEDETKGVEMAQSAIEGFKGQYVSNWLAGIRKKLGLFNAEDGDKDFVEKLLRLMHEHEADYTNTFRLLTLGQPEKTAMNGAAEFSEWLEQWQQRQSRQAQTKDEAMKLMRTNNPAVIPRNHRVEEALAAAVDEEDDSLVKQLIAVLKEPYAYSEEQERYAEVPERCQHGYVTYCGT.

Residues glycine 89, glycine 91, arginine 92, lysine 112, aspartate 124, glycine 125, arginine 175, and arginine 182 each contribute to the ATP site. The active-site Proton acceptor is the aspartate 251. Mg(2+)-binding residues include asparagine 252 and aspartate 261. Aspartate 261 is an ATP binding site.

This sequence belongs to the SELO family. Requires Mg(2+) as cofactor. Mn(2+) is required as a cofactor.

It catalyses the reaction L-seryl-[protein] + ATP = 3-O-(5'-adenylyl)-L-seryl-[protein] + diphosphate. The catalysed reaction is L-threonyl-[protein] + ATP = 3-O-(5'-adenylyl)-L-threonyl-[protein] + diphosphate. The enzyme catalyses L-tyrosyl-[protein] + ATP = O-(5'-adenylyl)-L-tyrosyl-[protein] + diphosphate. It carries out the reaction L-histidyl-[protein] + UTP = N(tele)-(5'-uridylyl)-L-histidyl-[protein] + diphosphate. It catalyses the reaction L-seryl-[protein] + UTP = O-(5'-uridylyl)-L-seryl-[protein] + diphosphate. The catalysed reaction is L-tyrosyl-[protein] + UTP = O-(5'-uridylyl)-L-tyrosyl-[protein] + diphosphate. In terms of biological role, nucleotidyltransferase involved in the post-translational modification of proteins. It can catalyze the addition of adenosine monophosphate (AMP) or uridine monophosphate (UMP) to a protein, resulting in modifications known as AMPylation and UMPylation. The polypeptide is Protein nucleotidyltransferase YdiU (Shouchella clausii (strain KSM-K16) (Alkalihalobacillus clausii)).